Here is a 248-residue protein sequence, read N- to C-terminus: Probable transcriptional regulatory protein Ccel_0181 (248 aa).

Belongs to the TACO1 family.

The protein resides in the cytoplasm. In Ruminiclostridium cellulolyticum (strain ATCC 35319 / DSM 5812 / JCM 6584 / H10) (Clostridium cellulolyticum), this protein is Probable transcriptional regulatory protein Ccel_0181.